The sequence spans 209 residues: Ubiquitin-conjugating enzyme E2 S (209 aa).

One can recognise a UBC core domain in the interval Q14 to Q160. Residue C98 is the Glycyl thioester intermediate of the active site. A disordered region spans residues A162–L209. Positions H169–L199 are enriched in basic and acidic residues. The span at K200–L209 shows a compositional bias: basic residues.

This sequence belongs to the ubiquitin-conjugating enzyme family.

It carries out the reaction S-ubiquitinyl-[E1 ubiquitin-activating enzyme]-L-cysteine + [E2 ubiquitin-conjugating enzyme]-L-cysteine = [E1 ubiquitin-activating enzyme]-L-cysteine + S-ubiquitinyl-[E2 ubiquitin-conjugating enzyme]-L-cysteine.. It functions in the pathway protein modification; protein ubiquitination. Catalyzes the covalent attachment of ubiquitin to other proteins. Acts as an essential factor of the anaphase promoting complex/cyclosome (APC/C), a cell cycle-regulated ubiquitin ligase that controls progression through mitosis. Acts by specifically elongating polyubiquitin chains initiated by the E2 enzyme vih/UbcH10 on APC/C substrates, enhancing the degradation of APC/C substrates by the proteasome and promoting mitotic exit. The protein is Ubiquitin-conjugating enzyme E2 S of Drosophila erecta (Fruit fly).